The sequence spans 459 residues: tRNA modification GTPase MnmE (459 aa).

(6S)-5-formyl-5,6,7,8-tetrahydrofolate is bound by residues Arg-22, Glu-85, and Arg-124. The 160-residue stretch at Gly-221–Phe-380 folds into the TrmE-type G domain. Asn-231 serves as a coordination point for K(+). GTP contacts are provided by residues Asn-231–Ser-236, Thr-250–Thr-256, and Asp-275–Gly-278. Mg(2+) is bound at residue Ser-235. Positions 250, 252, and 255 each coordinate K(+). Thr-256 provides a ligand contact to Mg(2+). Lys-459 is a (6S)-5-formyl-5,6,7,8-tetrahydrofolate binding site.

It belongs to the TRAFAC class TrmE-Era-EngA-EngB-Septin-like GTPase superfamily. TrmE GTPase family. As to quaternary structure, homodimer. Heterotetramer of two MnmE and two MnmG subunits. It depends on K(+) as a cofactor.

The protein localises to the cytoplasm. Functionally, exhibits a very high intrinsic GTPase hydrolysis rate. Involved in the addition of a carboxymethylaminomethyl (cmnm) group at the wobble position (U34) of certain tRNAs, forming tRNA-cmnm(5)s(2)U34. This chain is tRNA modification GTPase MnmE, found in Staphylococcus epidermidis (strain ATCC 35984 / DSM 28319 / BCRC 17069 / CCUG 31568 / BM 3577 / RP62A).